The following is a 376-amino-acid chain: Dual-specificity RNA methyltransferase RlmN (376 aa).

Residue E96 is the Proton acceptor of the active site. One can recognise a Radical SAM core domain in the interval 102-341 (DEDRATLCVS…VVVRKTRGDD (240 aa)). An intrachain disulfide couples C109 to C346. [4Fe-4S] cluster-binding residues include C116, C120, and C123. S-adenosyl-L-methionine is bound by residues 170–171 (GE), S202, 224–226 (SLH), and N303. C346 (S-methylcysteine intermediate) is an active-site residue.

Belongs to the radical SAM superfamily. RlmN family. It depends on [4Fe-4S] cluster as a cofactor.

It is found in the cytoplasm. It carries out the reaction adenosine(2503) in 23S rRNA + 2 reduced [2Fe-2S]-[ferredoxin] + 2 S-adenosyl-L-methionine = 2-methyladenosine(2503) in 23S rRNA + 5'-deoxyadenosine + L-methionine + 2 oxidized [2Fe-2S]-[ferredoxin] + S-adenosyl-L-homocysteine. The catalysed reaction is adenosine(37) in tRNA + 2 reduced [2Fe-2S]-[ferredoxin] + 2 S-adenosyl-L-methionine = 2-methyladenosine(37) in tRNA + 5'-deoxyadenosine + L-methionine + 2 oxidized [2Fe-2S]-[ferredoxin] + S-adenosyl-L-homocysteine. Specifically methylates position 2 of adenine 2503 in 23S rRNA and position 2 of adenine 37 in tRNAs. m2A2503 modification seems to play a crucial role in the proofreading step occurring at the peptidyl transferase center and thus would serve to optimize ribosomal fidelity. This is Dual-specificity RNA methyltransferase RlmN from Pseudoalteromonas atlantica (strain T6c / ATCC BAA-1087).